Consider the following 438-residue polypeptide: Aspartate--tRNA(Asp/Asn) ligase (438 aa).

Glu176 is a binding site for L-aspartate. The aspartate stretch occupies residues 198–201 (QLYK). L-aspartate is bound at residue Arg220. ATP is bound by residues 220-222 (RAE), 228-230 (RHL), and Glu361. 2 residues coordinate Mg(2+): Glu361 and Ser364. The L-aspartate site is built by Ser364 and Arg368. 409–412 (GADR) serves as a coordination point for ATP.

The protein belongs to the class-II aminoacyl-tRNA synthetase family. Type 2 subfamily. As to quaternary structure, homodimer. Requires Mg(2+) as cofactor.

It localises to the cytoplasm. The enzyme catalyses tRNA(Asx) + L-aspartate + ATP = L-aspartyl-tRNA(Asx) + AMP + diphosphate. Its function is as follows. Aspartyl-tRNA synthetase with relaxed tRNA specificity since it is able to aspartylate not only its cognate tRNA(Asp) but also tRNA(Asn). Reaction proceeds in two steps: L-aspartate is first activated by ATP to form Asp-AMP and then transferred to the acceptor end of tRNA(Asp/Asn). The sequence is that of Aspartate--tRNA(Asp/Asn) ligase from Methanococcus maripaludis (strain C7 / ATCC BAA-1331).